A 356-amino-acid polypeptide reads, in one-letter code: Glutamine synthetase cytosolic isozyme 1-1 (356 aa).

Serine 2 carries the N-acetylserine modification. 2 positions are modified to phosphoserine: serine 2 and serine 48. One can recognise a GS beta-grasp domain in the interval isoleucine 19–glycine 99. Positions lysine 36–glutamine 62 are disordered. Positions lysine 106–proline 356 constitute a GS catalytic domain.

The protein belongs to the glutamine synthetase family. As to quaternary structure, homooctamer. Interacts with CRK3 and GRF3. Phosphorylated by CRK3. Expressed in root tips, root hairs and epidermis. Ubiquitously expressed with higher levels in siliques and roots.

It is found in the cytoplasm. It catalyses the reaction L-glutamate + NH4(+) + ATP = L-glutamine + ADP + phosphate + H(+). Functionally, high-affinity glutamine synthetase which catalyzes the synthesis of glutamine from ammonium and glutamate. May contribute to the homeostatic control of glutamine synthesis in roots. This Arabidopsis thaliana (Mouse-ear cress) protein is Glutamine synthetase cytosolic isozyme 1-1 (GLN1-1).